The primary structure comprises 258 residues: Chymotrypsin-like elastase family member 1 (258 aa).

The signal sequence occupies residues 1–8; it reads MLVLYGHS. Residues 9–18 constitute a propeptide, activation peptide; that stretch reads TQDVPETNAR. Positions 19–256 constitute a Peptidase S1 domain; the sequence is VVGGTEARRN…YITWINNVIA (238 aa). An intrachain disulfide couples Cys-48 to Cys-64. The active-site Charge relay system is the His-63. The Ca(2+) site is built by Glu-77, Asn-79, Gln-82, and Glu-87. An N-linked (GlcNAc...) asparagine glycan is attached at Asn-79. The Charge relay system role is filled by Asp-111. 3 disulfides stabilise this stretch: Cys-145-Cys-212, Cys-176-Cys-192, and Cys-202-Cys-232. Ser-206 (charge relay system) is an active-site residue. Asn-233 carries an N-linked (GlcNAc...) asparagine glycan.

Belongs to the peptidase S1 family. Elastase subfamily. It depends on Ca(2+) as a cofactor.

It is found in the secreted. The catalysed reaction is Hydrolysis of proteins, including elastin. Preferential cleavage: Ala-|-Xaa.. Functionally, serine proteases that hydrolyze many proteins in addition to elastin. In Canis lupus familiaris (Dog), this protein is Chymotrypsin-like elastase family member 1 (CELA1).